Reading from the N-terminus, the 495-residue chain is Aspartyl/glutamyl-tRNA(Asn/Gln) amidotransferase subunit B (495 aa).

The protein belongs to the GatB/GatE family. GatB subfamily. In terms of assembly, heterotrimer of A, B and C subunits.

The enzyme catalyses L-glutamyl-tRNA(Gln) + L-glutamine + ATP + H2O = L-glutaminyl-tRNA(Gln) + L-glutamate + ADP + phosphate + H(+). It catalyses the reaction L-aspartyl-tRNA(Asn) + L-glutamine + ATP + H2O = L-asparaginyl-tRNA(Asn) + L-glutamate + ADP + phosphate + 2 H(+). In terms of biological role, allows the formation of correctly charged Asn-tRNA(Asn) or Gln-tRNA(Gln) through the transamidation of misacylated Asp-tRNA(Asn) or Glu-tRNA(Gln) in organisms which lack either or both of asparaginyl-tRNA or glutaminyl-tRNA synthetases. The reaction takes place in the presence of glutamine and ATP through an activated phospho-Asp-tRNA(Asn) or phospho-Glu-tRNA(Gln). The chain is Aspartyl/glutamyl-tRNA(Asn/Gln) amidotransferase subunit B from Beijerinckia indica subsp. indica (strain ATCC 9039 / DSM 1715 / NCIMB 8712).